Reading from the N-terminus, the 427-residue chain is Enolase (427 aa).

Glutamine 163 contacts (2R)-2-phosphoglycerate. The active-site Proton donor is the glutamate 205. Mg(2+) contacts are provided by aspartate 242, glutamate 285, and aspartate 312. Positions 337, 366, 367, and 388 each coordinate (2R)-2-phosphoglycerate. Lysine 337 functions as the Proton acceptor in the catalytic mechanism.

It belongs to the enolase family. The cofactor is Mg(2+).

It is found in the cytoplasm. The protein localises to the secreted. The protein resides in the cell surface. The catalysed reaction is (2R)-2-phosphoglycerate = phosphoenolpyruvate + H2O. The protein operates within carbohydrate degradation; glycolysis; pyruvate from D-glyceraldehyde 3-phosphate: step 4/5. Catalyzes the reversible conversion of 2-phosphoglycerate (2-PG) into phosphoenolpyruvate (PEP). It is essential for the degradation of carbohydrates via glycolysis. This Janthinobacterium sp. (strain Marseille) (Minibacterium massiliensis) protein is Enolase.